Reading from the N-terminus, the 354-residue chain is Putative cinnamyl alcohol dehydrogenase 4 (354 aa).

8 residues coordinate Zn(2+): cysteine 47, histidine 69, glutamate 70, cysteine 100, cysteine 103, cysteine 106, cysteine 114, and cysteine 163. Residues threonine 167, 188-193 (GLGGLG), 211-216 (STSESK), threonine 251, and 297-299 (SVT) each bind NADP(+).

It belongs to the zinc-containing alcohol dehydrogenase family. In terms of assembly, homodimer. Zn(2+) serves as cofactor.

The enzyme catalyses (E)-cinnamyl alcohol + NADP(+) = (E)-cinnamaldehyde + NADPH + H(+). It carries out the reaction (E)-coniferol + NADP(+) = (E)-coniferaldehyde + NADPH + H(+). The catalysed reaction is (E)-sinapyl alcohol + NADP(+) = (E)-sinapaldehyde + NADPH + H(+). It catalyses the reaction (E)-4-coumaroyl alcohol + NADP(+) = (E)-4-coumaraldehyde + NADPH + H(+). The enzyme catalyses (E)-caffeyl alcohol + NADP(+) = (E)-caffeyl aldehyde + NADPH + H(+). It functions in the pathway aromatic compound metabolism; phenylpropanoid biosynthesis. In terms of biological role, involved in lignin biosynthesis. Catalyzes the final step specific for the production of lignin monomers. Catalyzes the NADPH-dependent reduction of coniferaldehyde, 5-hydroxyconiferaldehyde, sinapaldehyde, 4-coumaraldehyde and caffeyl aldehyde to their respective alcohols. The protein is Putative cinnamyl alcohol dehydrogenase 4 of Oryza sativa subsp. japonica (Rice).